A 176-amino-acid polypeptide reads, in one-letter code: Peptidoglycan-associated lipoprotein (176 aa).

The first 21 residues, 1–21, serve as a signal peptide directing secretion; it reads MKAGSFYKLGLLVASAVLVAA. Cys22 carries N-palmitoyl cysteine lipidation. A lipid anchor (S-diacylglycerol cysteine) is attached at Cys22. Positions 60–176 constitute an OmpA-like domain; sequence YTTQAPHNQL…RVEFIYEATR (117 aa).

The protein belongs to the Pal lipoprotein family. As to quaternary structure, the Tol-Pal system is composed of five core proteins: the inner membrane proteins TolA, TolQ and TolR, the periplasmic protein TolB and the outer membrane protein Pal. They form a network linking the inner and outer membranes and the peptidoglycan layer.

It is found in the cell outer membrane. Part of the Tol-Pal system, which plays a role in outer membrane invagination during cell division and is important for maintaining outer membrane integrity. Very strongly associated with the peptidoglycan. This Legionella pneumophila protein is Peptidoglycan-associated lipoprotein.